Here is a 399-residue protein sequence, read N- to C-terminus: Argininosuccinate synthase (399 aa).

ATP is bound at residue 8–16 (AYSGGLDTS). Tyr87 is an L-citrulline binding site. Gly117 is a binding site for ATP. Positions 119, 123, and 124 each coordinate L-aspartate. Residue Asn123 coordinates L-citrulline. L-citrulline is bound by residues Arg127, Ser175, Glu259, and Tyr271.

It belongs to the argininosuccinate synthase family. Type 1 subfamily. In terms of assembly, homotetramer.

It localises to the cytoplasm. It carries out the reaction L-citrulline + L-aspartate + ATP = 2-(N(omega)-L-arginino)succinate + AMP + diphosphate + H(+). Its pathway is amino-acid biosynthesis; L-arginine biosynthesis; L-arginine from L-ornithine and carbamoyl phosphate: step 2/3. This is Argininosuccinate synthase from Corynebacterium diphtheriae (strain ATCC 700971 / NCTC 13129 / Biotype gravis).